Here is a 321-residue protein sequence, read N- to C-terminus: Serine/threonine-protein phosphatase 4 catalytic subunit 2 (321 aa).

Mn(2+) contacts are provided by Asp64, His66, Asp92, and Asn124. The active-site Proton donor is His125. Residues His174 and His249 each contribute to the Mn(2+) site.

It belongs to the PPP phosphatase family. PP-4 (PP-X) subfamily. As to quaternary structure, serine/threonine-protein phosphatase 4 (PP4) occurs in different assemblies of the catalytic and one or more regulatory subunits. Requires Mn(2+) as cofactor.

It carries out the reaction O-phospho-L-seryl-[protein] + H2O = L-seryl-[protein] + phosphate. The catalysed reaction is O-phospho-L-threonyl-[protein] + H2O = L-threonyl-[protein] + phosphate. In terms of biological role, protein phosphatase which seems to be involved in larval development but not essential for embryogenesis. This Caenorhabditis elegans protein is Serine/threonine-protein phosphatase 4 catalytic subunit 2.